We begin with the raw amino-acid sequence, 500 residues long: Probable cytosol aminopeptidase (500 aa).

Mn(2+) is bound by residues Lys269 and Asp274. Lys281 is a catalytic residue. Positions 292, 351, and 353 each coordinate Mn(2+). The active site involves Arg355.

The protein belongs to the peptidase M17 family. Requires Mn(2+) as cofactor.

Its subcellular location is the cytoplasm. The catalysed reaction is Release of an N-terminal amino acid, Xaa-|-Yaa-, in which Xaa is preferably Leu, but may be other amino acids including Pro although not Arg or Lys, and Yaa may be Pro. Amino acid amides and methyl esters are also readily hydrolyzed, but rates on arylamides are exceedingly low.. The enzyme catalyses Release of an N-terminal amino acid, preferentially leucine, but not glutamic or aspartic acids.. In terms of biological role, presumably involved in the processing and regular turnover of intracellular proteins. Catalyzes the removal of unsubstituted N-terminal amino acids from various peptides. In Acidithiobacillus ferrooxidans (strain ATCC 23270 / DSM 14882 / CIP 104768 / NCIMB 8455) (Ferrobacillus ferrooxidans (strain ATCC 23270)), this protein is Probable cytosol aminopeptidase.